A 278-amino-acid polypeptide reads, in one-letter code: Undecaprenyl-diphosphatase (278 aa).

8 helical membrane passes run 3-23 (YILIGVILGIVQGISEWIPIS), 42-62 (VAYSFGLFMEIGTIAAAIIYF), 88-108 (FLVIVTIITGLMGVPLYLFVI), 112-132 (ILGLPMTVLGVVLLIDGIIIY), 152-172 (IIIVGIAQGLAALPGVSRSGI), 190-210 (LSFISLIPAALGAIGVTVLFS), 225-245 (GLLISIVVATFVSIFFINALL), and 253-273 (VVVLVIILGIIAIISGILSGI).

It belongs to the UppP family.

Its subcellular location is the cell membrane. The catalysed reaction is di-trans,octa-cis-undecaprenyl diphosphate + H2O = di-trans,octa-cis-undecaprenyl phosphate + phosphate + H(+). Its function is as follows. Catalyzes the dephosphorylation of undecaprenyl diphosphate (UPP). This Saccharolobus islandicus (strain M.16.4 / Kamchatka #3) (Sulfolobus islandicus) protein is Undecaprenyl-diphosphatase.